The sequence spans 453 residues: Aldehyde dehydrogenase, dimeric NADP-preferring (453 aa).

The residue at position 2 (serine 2) is an N-acetylserine. At lysine 178 the chain carries N6-acetyllysine. NAD(+) is bound at residue 188 to 193 (GNTAVG). N6-acetyllysine is present on lysine 194. Residues glutamate 210 and cysteine 244 contribute to the active site.

Belongs to the aldehyde dehydrogenase family. In terms of assembly, homodimer.

Its subcellular location is the cytoplasm. It carries out the reaction an aldehyde + NAD(+) + H2O = a carboxylate + NADH + 2 H(+). The catalysed reaction is octanal + NAD(+) + H2O = octanoate + NADH + 2 H(+). Its function is as follows. ALDHs play a major role in the detoxification of alcohol-derived acetaldehyde. They are involved in the metabolism of corticosteroids, biogenic amines, neurotransmitters, and lipid peroxidation. Oxidizes medium and long chain aldehydes into non-toxic fatty acids. Preferentially oxidizes aromatic aldehyde substrates. Comprises about 50 percent of corneal epithelial soluble proteins. May play a role in preventing corneal damage caused by ultraviolet light. The polypeptide is Aldehyde dehydrogenase, dimeric NADP-preferring (ALDH3A1) (Canis lupus familiaris (Dog)).